The following is a 493-amino-acid chain: FAD-linked oxidoreductase tazL (493 aa).

The first 17 residues, 1-17, serve as a signal peptide directing secretion; the sequence is MRSNTVILAALPLVASA. Asn29, Asn41, Asn53, Asn91, Asn253, Asn318, and Asn387 each carry an N-linked (GlcNAc...) asparagine glycan. Residues 63-235 enclose the FAD-binding PCMH-type domain; the sequence is WAEPTFAVTI…TSATYEIFDA (173 aa).

This sequence belongs to the oxygen-dependent FAD-linked oxidoreductase family.

It participates in secondary metabolite biosynthesis. Functionally, FAD-linked oxidoreductase; part of the gene cluster that mediates the biosynthesis of azaterrilone A and other azaphilones, a class of fungal metabolites characterized by a highly oxygenated pyrano-quinone bicyclic core and exhibiting a broad range of bioactivities. The first step of the pathway begins with the non-reducing polyketide synthase tazA that assembles one acetyl-CoA starter unit, five malonyl-CoA units, and catalyzes a series of Claisen condensations, methylation, PT-mediated cyclization, and finally releases the first hexaketide precursor through the R-domain. The tazA product then undergoes reduction on its terminal ketone and the following pyran-ring formation by yet undetermined enzyme(s). Dehydration and enoyl reduction, possibly involving the trans-enoyl reductase tazE leads to the next intermediate. TazD is predicted as an acetyltransferase and might catalyze the acetylation steps leading to the synthesis of azaterrilone A. Azaterrilone A is not the final product of the taz pathway and both the highly reducing polyketide synthase tazB and the dual enzyme tazHJ catalyze late steps of the pathway, leading to the production of the 2 final stereoisomers that contain additional polyketide modification whose structures have still to be determined. The protein is FAD-linked oxidoreductase tazL of Aspergillus terreus (strain NIH 2624 / FGSC A1156).